We begin with the raw amino-acid sequence, 146 residues long: Snaclec 5 (146 aa).

The first 23 residues, 1–23 (MGRFIFISFGLLVVFLSLSGTEA), serve as a signal peptide directing secretion. Intrachain disulfides connect Cys-25/Cys-36, Cys-53/Cys-142, and Cys-119/Cys-134. Positions 32-143 (YEGHCYRVFD…CRNYGHFVCK (112 aa)) constitute a C-type lectin domain.

This sequence belongs to the snaclec family. Heterodimer; disulfide-linked. In terms of tissue distribution, expressed by the venom gland.

Its subcellular location is the secreted. Interferes with one step of hemostasis (modulation of platelet aggregation, or coagulation cascade, for example). The chain is Snaclec 5 from Echis pyramidum leakeyi (Leakey's carpet viper).